We begin with the raw amino-acid sequence, 279 residues long: Large ribosomal subunit protein uL2 (279 aa).

2 disordered regions span residues 34-58 (LRPLHKTGGRNNTGRITTRHKGGGH) and 225-279 (VMNP…KNKR). Over residues 251-268 (GKPEGRTRRPNKESDKLI) the composition is skewed to basic and acidic residues. Over residues 269-279 (VRRRRTGKNKR) the composition is skewed to basic residues.

The protein belongs to the universal ribosomal protein uL2 family. Part of the 50S ribosomal subunit. Forms a bridge to the 30S subunit in the 70S ribosome.

Its function is as follows. One of the primary rRNA binding proteins. Required for association of the 30S and 50S subunits to form the 70S ribosome, for tRNA binding and peptide bond formation. It has been suggested to have peptidyltransferase activity; this is somewhat controversial. Makes several contacts with the 16S rRNA in the 70S ribosome. The chain is Large ribosomal subunit protein uL2 from Micrococcus luteus (strain ATCC 4698 / DSM 20030 / JCM 1464 / CCM 169 / CCUG 5858 / IAM 1056 / NBRC 3333 / NCIMB 9278 / NCTC 2665 / VKM Ac-2230) (Micrococcus lysodeikticus).